Reading from the N-terminus, the 179-residue chain is ATP synthase subunit delta (179 aa).

The protein belongs to the ATPase delta chain family. In terms of assembly, F-type ATPases have 2 components, F(1) - the catalytic core - and F(0) - the membrane proton channel. F(1) has five subunits: alpha(3), beta(3), gamma(1), delta(1), epsilon(1). F(0) has three main subunits: a(1), b(2) and c(10-14). The alpha and beta chains form an alternating ring which encloses part of the gamma chain. F(1) is attached to F(0) by a central stalk formed by the gamma and epsilon chains, while a peripheral stalk is formed by the delta and b chains.

It localises to the cell membrane. In terms of biological role, f(1)F(0) ATP synthase produces ATP from ADP in the presence of a proton or sodium gradient. F-type ATPases consist of two structural domains, F(1) containing the extramembraneous catalytic core and F(0) containing the membrane proton channel, linked together by a central stalk and a peripheral stalk. During catalysis, ATP synthesis in the catalytic domain of F(1) is coupled via a rotary mechanism of the central stalk subunits to proton translocation. Its function is as follows. This protein is part of the stalk that links CF(0) to CF(1). It either transmits conformational changes from CF(0) to CF(1) or is implicated in proton conduction. The chain is ATP synthase subunit delta from Metamycoplasma arthritidis (strain 158L3-1) (Mycoplasma arthritidis).